Here is a 303-residue protein sequence, read N- to C-terminus: Ribosomal RNA small subunit methyltransferase H (303 aa).

S-adenosyl-L-methionine is bound by residues 33-35 (GGH), Asp-52, Phe-79, Asp-97, and Gln-104.

The protein belongs to the methyltransferase superfamily. RsmH family.

The protein localises to the cytoplasm. The catalysed reaction is cytidine(1402) in 16S rRNA + S-adenosyl-L-methionine = N(4)-methylcytidine(1402) in 16S rRNA + S-adenosyl-L-homocysteine + H(+). Functionally, specifically methylates the N4 position of cytidine in position 1402 (C1402) of 16S rRNA. The sequence is that of Ribosomal RNA small subunit methyltransferase H from Wolinella succinogenes (strain ATCC 29543 / DSM 1740 / CCUG 13145 / JCM 31913 / LMG 7466 / NCTC 11488 / FDC 602W) (Vibrio succinogenes).